A 279-amino-acid polypeptide reads, in one-letter code: Methyltransferase ausD (279 aa).

S-adenosyl-L-methionine contacts are provided by residues 124–125 (DL), 152–153 (DI), and Arg-244.

It belongs to the class I-like SAM-binding methyltransferase superfamily. As to quaternary structure, homodimer.

It functions in the pathway secondary metabolite biosynthesis; terpenoid biosynthesis. Methyltransferase; part of the gene cluster that mediates the biosynthesis of calidodehydroaustin, a fungal meroterpenoid. The first step of the pathway is the synthesis of 3,5-dimethylorsellinic acid by the polyketide synthase ausA. 3,5-dimethylorsellinic acid is then prenylated by the polyprenyl transferase ausN. Further epoxidation by the FAD-dependent monooxygenase ausM and cyclization by the probable terpene cyclase ausL lead to the formation of protoaustinoid A. Protoaustinoid A is then oxidized to spiro-lactone preaustinoid A3 by the combined action of the FAD-binding monooxygenases ausB and ausC, and the dioxygenase ausE. Acid-catalyzed keto-rearrangement and ring contraction of the tetraketide portion of preaustinoid A3 by ausJ lead to the formation of preaustinoid A4. The aldo-keto reductase ausK, with the help of ausH, is involved in the next step by transforming preaustinoid A4 into isoaustinone which is in turn hydroxylated by the P450 monooxygenase ausI to form austinolide. The cytochrome P450 monooxygenase ausG modifies austinolide to austinol. Austinol is further acetylated to austin by the O-acetyltransferase ausP, which spontaneously changes to dehydroaustin. The cytochrome P450 monooxygenase ausR then converts dehydroaustin is into 7-dehydrodehydroaustin. The hydroxylation catalyzed by ausR permits the O-acetyltransferase ausQ to add an additional acetyl group to the molecule, leading to the formation of acetoxydehydroaustin. The short chain dehydrogenase ausT catalyzes the reduction of the double bond present between carbon atoms 1 and 2 to convert 7-dehydrodehydroaustin into 1,2-dihydro-7-hydroxydehydroaustin. AusQ catalyzes not only an acetylation reaction but also the addition of the PKS ausV diketide product to 1,2-dihydro-7-hydroxydehydroaustin, forming precalidodehydroaustin. Finally, the iron/alpha-ketoglutarate-dependent dioxygenase converts precalidodehydroaustin into calidodehydroaustin. This Aspergillus calidoustus protein is Methyltransferase ausD.